Reading from the N-terminus, the 565-residue chain is DNA primase (565 aa).

Residues 37–61 form a CHC2-type zinc finger; sequence CPFHSETNPSFYVHPGLKIYHCFGC. The 82-residue stretch at 248 to 329 folds into the Toprim domain; the sequence is GFFVITEGYF…NVLVATPSPY (82 aa). Mg(2+) contacts are provided by E254, D298, and D300.

It belongs to the DnaG primase family. As to quaternary structure, monomer. Interacts with DnaB. It depends on Zn(2+) as a cofactor. Mg(2+) is required as a cofactor.

The enzyme catalyses ssDNA + n NTP = ssDNA/pppN(pN)n-1 hybrid + (n-1) diphosphate.. Its function is as follows. RNA polymerase that catalyzes the synthesis of short RNA molecules used as primers for DNA polymerase during DNA replication. The polypeptide is DNA primase (Thermotoga maritima (strain ATCC 43589 / DSM 3109 / JCM 10099 / NBRC 100826 / MSB8)).